Here is a 1468-residue protein sequence, read N- to C-terminus: DNA polymerase alpha catalytic subunit A (1468 aa).

Over residues 1 to 12 (MSSKSEKLEKLR) the composition is skewed to basic and acidic residues. Disordered regions lie at residues 1–34 (MSSKSEKLEKLRKLQAARNGTSIDDYEGDESDGD), 71–135 (GVEE…KKSI), and 166–205 (NLNSSPTSEFKSSIKRVNGNDESSHDAGISKKVKIDPDSS). At S2 the chain carries N-acetylserine. A Phosphoserine modification is found at S31. A compositionally biased stretch (basic and acidic residues) spans 71–80 (GVEEDWREVD). A phosphoserine mark is found at S82, S83, S84, S169, and S170. The segment covering 166–176 (NLNSSPTSEFK) has biased composition (polar residues). T172 is modified (phosphothreonine). Residues 183-205 (NGNDESSHDAGISKKVKIDPDSS) show a composition bias toward basic and acidic residues. A phosphoserine mark is found at S240 and S274. The disordered stretch occupies residues 256–275 (LANPPSAQSLADEEDDEDSD). The span at 266-275 (ADEEDDEDSD) shows a compositional bias: acidic residues. Phosphothreonine is present on residues T309 and T313. Positions 813–837 (PDKEGNRSRAQKQRQNEENADAPVN) are disordered. The segment at 1246–1381 (KKYFRREGGN…CTGVMRYKYS (136 aa)) is DNA-binding. Residues C1287, C1290, C1314, C1317, C1348, C1353, C1367, and C1372 each coordinate Zn(2+). The CysA-type zinc-finger motif lies at 1287 to 1317 (CPSCDKRFPFGGIVSSNYYRVSYNGLQCKHC). The CysB motif signature appears at 1348-1372 (CDDSTCGIVTRQVSVFGKRCLNDGC).

This sequence belongs to the DNA polymerase type-B family. As to quaternary structure, DNA polymerase alpha:primase is a four subunit enzyme complex, which is assembled throughout the cell cycle, and consists of the two DNA polymerase subunits A POL1 and B POL12, and the DNA primase large PRI2 and small PRI1 subunits. Subunit B POL12 binds to subunit A POL1. POL1 interacts with CDC13, POB3, SPT16 and MCM10.

It is found in the nucleus. The enzyme catalyses DNA(n) + a 2'-deoxyribonucleoside 5'-triphosphate = DNA(n+1) + diphosphate. Functionally, catalytic component of DNA polymerase alpha, which in complex with DNA primase (DNA polymerase alpha:primase) constitutes a replicative polymerase. POL1 has a role in promoting telomere replication during interaction with CDC13. This is DNA polymerase alpha catalytic subunit A (POL1) from Saccharomyces cerevisiae (strain ATCC 204508 / S288c) (Baker's yeast).